The sequence spans 918 residues: von Willebrand factor A domain-containing protein DDB_G0292016 (918 aa).

The VIT domain maps to 44 to 172 (KRCGLYSLKN…NVKVRVVISS (129 aa)). In terms of domain architecture, VWFA spans 299–467 (EFIFLIDCSG…NMEKQVMKLL (169 aa)). The segment at 625–814 (VDIMNQSPPI…PSAPSQQKSV (190 aa)) is disordered. Residues 650–690 (ASGALSSSILSRKRSSSPSTATKRSSSSSFSSSYLSLSSSS) show a composition bias toward low complexity. Residues 716 to 746 (YESDGGDQSSEQDEEEEDDCDDFHEDLDEDL) are compositionally biased toward acidic residues. Basic and acidic residues predominate over residues 752–774 (DVDKKECEKECKKKDSSKVDLKV). Residues 777–814 (SKVPLPSRSPSVSKPTTTSLLSPSPKSAPSAPSQQKSV) show a composition bias toward low complexity.

In Dictyostelium discoideum (Social amoeba), this protein is von Willebrand factor A domain-containing protein DDB_G0292016.